Reading from the N-terminus, the 299-residue chain is Acetylglutamate kinase (299 aa).

Residues 72–73 (GG), arginine 94, and asparagine 196 each bind substrate.

Belongs to the acetylglutamate kinase family. ArgB subfamily.

The protein resides in the cytoplasm. The enzyme catalyses N-acetyl-L-glutamate + ATP = N-acetyl-L-glutamyl 5-phosphate + ADP. The protein operates within amino-acid biosynthesis; L-arginine biosynthesis; N(2)-acetyl-L-ornithine from L-glutamate: step 2/4. Functionally, catalyzes the ATP-dependent phosphorylation of N-acetyl-L-glutamate. The chain is Acetylglutamate kinase from Burkholderia vietnamiensis (strain G4 / LMG 22486) (Burkholderia cepacia (strain R1808)).